Reading from the N-terminus, the 312-residue chain is Glyoxylate/hydroxypyruvate reductase A (312 aa).

Arg-227 is an active-site residue. The active-site Proton donor is the His-275.

It belongs to the D-isomer specific 2-hydroxyacid dehydrogenase family. GhrA subfamily.

The protein resides in the cytoplasm. The enzyme catalyses glycolate + NADP(+) = glyoxylate + NADPH + H(+). It carries out the reaction (R)-glycerate + NAD(+) = 3-hydroxypyruvate + NADH + H(+). The catalysed reaction is (R)-glycerate + NADP(+) = 3-hydroxypyruvate + NADPH + H(+). Its function is as follows. Catalyzes the NADPH-dependent reduction of glyoxylate and hydroxypyruvate into glycolate and glycerate, respectively. The sequence is that of Glyoxylate/hydroxypyruvate reductase A from Escherichia coli (strain ATCC 8739 / DSM 1576 / NBRC 3972 / NCIMB 8545 / WDCM 00012 / Crooks).